We begin with the raw amino-acid sequence, 2341 residues long: Pecanex-like protein 1 (2341 aa).

The next 2 helical transmembrane spans lie at 28-50 (ATFVNALHLYLWLFLLGLPFTLY) and 57-74 (MIIVAVYCPVIAAVFIVL). The segment at 98–163 (FTDQRTKAEQ…SNQIGSGSSR (66 aa)) is disordered. N-linked (GlcNAc...) asparagine glycosylation is present at asparagine 109. Over residues 143 to 163 (SSRNSYAGLDPSNQIGSGSSR) the composition is skewed to polar residues. An N-linked (GlcNAc...) asparagine glycan is attached at asparagine 215. 3 disordered regions span residues 270–294 (HSHSYRKDHRPRGVPRTSSSAVAFP), 311–331 (DPVSELESSKPLSGSKESLVE), and 344–689 (DLKI…TRAR). Over residues 272 to 282 (HSYRKDHRPRG) the composition is skewed to basic residues. 2 stretches are compositionally biased toward polar residues: residues 320–331 (KPLSGSKESLVE) and 347–356 (INTSQPPTKS). N-linked (GlcNAc...) asparagine glycosylation occurs at asparagine 348. Positions 370–388 (SLRSLSTRSSGSTESYCSG) are enriched in low complexity. Residue asparagine 394 is glycosylated (N-linked (GlcNAc...) asparagine). Residues 394–404 (NSTVSSYKSEQ) show a composition bias toward polar residues. Basic and acidic residues-rich tracts occupy residues 430–455 (KKECCAGPEEKNSCASDKRTSSEKIA), 465–478 (HEAKDPTPSDEMHN), and 527–544 (SKVRKDVGGKQKEGDVRP). Basic residues predominate over residues 554-569 (ASAHKSGRRRTGKKRA). Over residues 605-635 (QSDLSRASSVQSAHQFSSDSSSSTTSHSCQS) the composition is skewed to low complexity. N-linked (GlcNAc...) asparagine glycosylation occurs at asparagine 702. Residues 756-834 (QVAFPEGEEQ…STAQVKVQSR (79 aa)) are disordered. Positions 814-832 (LSLQDGQQGQQSTAQVKVQ) are enriched in low complexity. Residues asparagine 852 and asparagine 863 are each glycosylated (N-linked (GlcNAc...) asparagine). A run of 3 helical transmembrane segments spans residues 1003–1025 (ILENVLAVILAILVAFLGSILLI), 1032–1049 (IWVFQFCLVIASCQYSLL), and 1067–1089 (IAYSRPVYFCICCGLIWLLDYGS). An N-linked (GlcNAc...) asparagine glycan is attached at asparagine 1091. The helical transmembrane segment at 1110–1132 (FISARDLVIVFTLCFPIVFFIGL) threads the bilayer. Asparagine 1155 is a glycosylation site (N-linked (GlcNAc...) asparagine). Transmembrane regions (helical) follow at residues 1160–1182 (LLAALYSFICSIVAVALLYGLCY), 1194–1213 (IPVLFSIFCGLLVAVSYHLS), 1266–1288 (LVVCIVIGVLYFAIHVSTVFTVL), and 1295–1312 (VLYTLVGFVGFVTHYVLP). 5 N-linked (GlcNAc...) asparagine glycosylation sites follow: asparagine 1579, asparagine 1720, asparagine 1982, asparagine 2062, and asparagine 2072. 2 disordered regions span residues 2062 to 2120 (NATT…SPAR) and 2217 to 2237 (GQSSATDAQPGNTLSPANNSH). Polar residues-rich tracts occupy residues 2069–2078 (PHSNVTQGSI), 2096–2114 (YPPTLGTSHSSHSVQSGLV), and 2217–2236 (GQSSATDAQPGNTLSPANNS). Asparagine 2234 and asparagine 2260 each carry an N-linked (GlcNAc...) asparagine glycan.

The protein belongs to the pecanex family.

The protein localises to the membrane. In Homo sapiens (Human), this protein is Pecanex-like protein 1.